We begin with the raw amino-acid sequence, 141 residues long: Large ribosomal subunit protein uL11 (141 aa).

The protein belongs to the universal ribosomal protein uL11 family. As to quaternary structure, part of the ribosomal stalk of the 50S ribosomal subunit. Interacts with L10 and the large rRNA to form the base of the stalk. L10 forms an elongated spine to which L12 dimers bind in a sequential fashion forming a multimeric L10(L12)X complex. One or more lysine residues are methylated.

Forms part of the ribosomal stalk which helps the ribosome interact with GTP-bound translation factors. The polypeptide is Large ribosomal subunit protein uL11 (Gloeothece citriformis (strain PCC 7424) (Cyanothece sp. (strain PCC 7424))).